Reading from the N-terminus, the 150-residue chain is MKIILTADVTGLGESGDIVEVKDGYARNLLLPRGLAIVATKGAQKQVETIRRTQEAKRVRNLEHAQELKQQLQGLGAVTLTAKVSKQGKLFGSITAADIVSAVRKAGGPNLDKRSVDTRGHIKSLGKHAVDVRLHPDVKASVSVQISAAS.

The protein belongs to the bacterial ribosomal protein bL9 family.

Its function is as follows. Binds to the 23S rRNA. The protein is Large ribosomal subunit protein bL9 of Saccharopolyspora erythraea (strain ATCC 11635 / DSM 40517 / JCM 4748 / NBRC 13426 / NCIMB 8594 / NRRL 2338).